We begin with the raw amino-acid sequence, 1119 residues long: Solute carrier family 38 member 10 (1119 aa).

10 consecutive transmembrane segments (helical) span residues 4 to 24, 36 to 58, 84 to 104, 120 to 140, 153 to 173, 229 to 249, 272 to 292, 323 to 343, 345 to 365, and 378 to 398; these read AAAS…GVSV, IVLG…MFLV, LVET…YVVI, VGGT…VLPL, FSAM…LSSL, IFAS…FFGY, MLRV…ILPC, ALTL…PNVE, ILGL…PALI, and VVLW…LSVS. Disordered stretches follow at residues 438–691 and 731–1071; these read AEDG…EEAG and KEIH…DGVI. Basic and acidic residues-rich tracts occupy residues 439–454, 466–475, 493–522, 544–559, and 592–603; these read EDGR…REEL, PGREDGKEAP, EAHR…ENKP, DSER…EVGK, and AKEDLGPGDRGL. The residue at position 612 (Ser612) is a Phosphoserine. Pro residues predominate over residues 652 to 667; that stretch reads PPLPAEKPAPGPGLPP. 3 stretches are compositionally biased toward basic and acidic residues: residues 668–677, 731–752, and 763–773; these read EPREQRDVER, KEIH…EVHQ, and EAPEGKARETV. Thr772 carries the phosphothreonine modification. At Ser802 the chain carries Phosphoserine. Composition is skewed to basic and acidic residues over residues 832-841 and 863-876; these read KLRDGQKDAA and PARE…RLAE. A compositionally biased stretch (polar residues) spans 880-889; it reads GQSQDVTGGS. Phosphoserine is present on residues Ser889, Ser965, and Ser997. Basic and acidic residues-rich tracts occupy residues 975 to 1005, 1012 to 1022, and 1033 to 1042; these read HRLD…RGGE, PRQRPEPELGL, and DNAKPNRDLK.

It belongs to the amino acid/polyamine transporter 2 family.

It is found in the membrane. The enzyme catalyses L-glutamate(out) = L-glutamate(in). It carries out the reaction L-glutamine(out) = L-glutamine(in). It catalyses the reaction L-alanine(in) = L-alanine(out). The catalysed reaction is L-serine(in) = L-serine(out). The enzyme catalyses L-leucine(in) = L-leucine(out). Its function is as follows. Facilitates bidirectional transport of amino acids. May act as a glutamate sensor that regulates glutamate-glutamine cycle and mTOR signaling in the brain. The transport mechanism remains to be elucidated. The sequence is that of Solute carrier family 38 member 10 from Homo sapiens (Human).